A 173-amino-acid chain; its full sequence is NADH-ubiquinone oxidoreductase chain 6 (173 aa).

The next 5 helical transmembrane spans lie at 1–21, 24–44, 53–73, 87–107, and 141–161; these read MTYL…AVAS, APYF…GVLV, LVLF…SAAL, VLGY…LFWG, and GGML…VLEL.

It belongs to the complex I subunit 6 family.

It is found in the mitochondrion membrane. The catalysed reaction is a ubiquinone + NADH + 5 H(+)(in) = a ubiquinol + NAD(+) + 4 H(+)(out). Functionally, core subunit of the mitochondrial membrane respiratory chain NADH dehydrogenase (Complex I) that is believed to belong to the minimal assembly required for catalysis. Complex I functions in the transfer of electrons from NADH to the respiratory chain. The immediate electron acceptor for the enzyme is believed to be ubiquinone. The sequence is that of NADH-ubiquinone oxidoreductase chain 6 (MT-ND6) from Oncorhynchus mykiss (Rainbow trout).